The primary structure comprises 117 residues: Large ribosomal subunit protein bL20 (117 aa).

This sequence belongs to the bacterial ribosomal protein bL20 family.

Its function is as follows. Binds directly to 23S ribosomal RNA and is necessary for the in vitro assembly process of the 50S ribosomal subunit. It is not involved in the protein synthesizing functions of that subunit. This is Large ribosomal subunit protein bL20 from Aliivibrio fischeri (strain ATCC 700601 / ES114) (Vibrio fischeri).